A 469-amino-acid chain; its full sequence is Cell division protein FtsP (469 aa).

The tat-type signal signal peptide spans 1–29 (MPRLSRRQLLKTAAISTALSTVPAPLLAA). The 59-residue stretch at 228–286 (IRLRLLNASLARAYDLRLDNDQEMLLIAQDLSFLPKAKSVKSLVLSPGERAEILVNMNE) folds into the Plastocyanin-like domain.

The protein belongs to the FtsP family. Post-translationally, predicted to be exported by the Tat system. The position of the signal peptide cleavage has not been experimentally proven.

The protein resides in the periplasm. Cell division protein that is required for growth during stress conditions. May be involved in protecting or stabilizing the divisomal assembly under conditions of stress. The polypeptide is Cell division protein FtsP (Haemophilus influenzae (strain 86-028NP)).